Reading from the N-terminus, the 346-residue chain is Cyclin-dependent kinase 2 (346 aa).

N-acetylmethionine is present on methionine 1. Residues 4–334 enclose the Protein kinase domain; that stretch reads FQKVEKIGEG…AKAALAHPFF (331 aa). Residue lysine 6 is modified to N6-acetyllysine. Residue 10–18 coordinates ATP; that stretch reads IGEGTYGVV. Threonine 14 is modified (phosphothreonine). Tyrosine 15 carries the phosphotyrosine; by WEE1 modification. Residue tyrosine 19 is modified to Phosphotyrosine. ATP contacts are provided by residues lysine 33, 81–83, and aspartate 86; that span reads EFL. Catalysis depends on aspartate 127, which acts as the Proton acceptor. ATP is bound by residues 129 to 132 and aspartate 145; that span reads KPQN. Positions 132 and 145 each coordinate Mg(2+). Threonine 160 bears the Phosphothreonine; by CAK and CCRK mark. Serine 218 is modified (phosphoserine).

This sequence belongs to the protein kinase superfamily. CMGC Ser/Thr protein kinase family. CDC2/CDKX subfamily. As to quaternary structure, found in a complex with CABLES1, CCNA1 and CCNE1. Interacts with CABLES1. Interacts with UHRF2. Part of a complex consisting of UHRF2, CDK2 and CCNE1. Interacts with the Speedy/Ringo proteins SPDYA and SPDYC. Interaction with SPDYA promotes kinase activation via a conformation change that alleviates obstruction of the substrate-binding cleft by the T-loop. Found in a complex with both SPDYA and CDKN1B/KIP1. Binds to RB1 and CDK7. Binding to CDKN1A (p21) leads to CDK2/cyclin E inactivation at the G1-S phase DNA damage checkpoint, thereby arresting cells at the G1-S transition during DNA repair. Associated with PTPN6 and beta-catenin/CTNNB1. Interacts with CACUL1. May interact with CEP63. Interacts with ANKRD17. Interacts with CEBPA (when phosphorylated). Forms a ternary complex with CCNA2 and CDKN1B; CDKN1B inhibits the kinase activity of CDK2 through conformational rearrangements. Interacts with cyclins A, B1, B3, D, or E. Interacts with CDK2AP2. The cofactor is Mg(2+). Phosphorylated at Thr-160 by CDK7 in a CAK complex. Phosphorylation at Thr-160 promotes kinase activity, whereas phosphorylation at Tyr-15 by WEE1 reduces slightly kinase activity. Phosphorylated on Thr-14 and Tyr-15 during S and G2 phases before being dephosphorylated by CDC25A. Post-translationally, nitrosylated after treatment with nitric oxide (DETA-NO).

It localises to the cytoplasm. The protein localises to the cytoskeleton. Its subcellular location is the microtubule organizing center. The protein resides in the centrosome. It is found in the nucleus. It localises to the cajal body. The protein localises to the endosome. It catalyses the reaction L-seryl-[protein] + ATP = O-phospho-L-seryl-[protein] + ADP + H(+). It carries out the reaction L-threonyl-[protein] + ATP = O-phospho-L-threonyl-[protein] + ADP + H(+). Phosphorylation at Thr-14 or Tyr-15 inactivates the enzyme, while phosphorylation at Thr-160 activates it. Stimulated by MYC. Inactivated by CDKN1A (p21). Functionally, serine/threonine-protein kinase involved in the control of the cell cycle; essential for meiosis, but dispensable for mitosis. Phosphorylates CABLES1, CTNNB1, CDK2AP2, ERCC6, NBN, USP37, p53/TP53, NPM1, CDK7, RB1, BRCA2, MYC, NPAT, EZH2. Triggers duplication of centrosomes and DNA. Acts at the G1-S transition to promote the E2F transcriptional program and the initiation of DNA synthesis, and modulates G2 progression; controls the timing of entry into mitosis/meiosis by controlling the subsequent activation of cyclin B/CDK1 by phosphorylation, and coordinates the activation of cyclin B/CDK1 at the centrosome and in the nucleus. Crucial role in orchestrating a fine balance between cellular proliferation, cell death, and DNA repair in embryonic stem cells (ESCs). Activity of CDK2 is maximal during S phase and G2; activated by interaction with cyclin E during the early stages of DNA synthesis to permit G1-S transition, and subsequently activated by cyclin A2 (cyclin A1 in germ cells) during the late stages of DNA replication to drive the transition from S phase to mitosis, the G2 phase. EZH2 phosphorylation promotes H3K27me3 maintenance and epigenetic gene silencing. Cyclin E/CDK2 prevents oxidative stress-mediated Ras-induced senescence by phosphorylating MYC. Involved in G1-S phase DNA damage checkpoint that prevents cells with damaged DNA from initiating mitosis; regulates homologous recombination-dependent repair by phosphorylating BRCA2, this phosphorylation is low in S phase when recombination is active, but increases as cells progress towards mitosis. In response to DNA damage, double-strand break repair by homologous recombination a reduction of CDK2-mediated BRCA2 phosphorylation. Involved in regulation of telomere repair by mediating phosphorylation of NBN. Phosphorylation of RB1 disturbs its interaction with E2F1. NPM1 phosphorylation by cyclin E/CDK2 promotes its dissociation from unduplicated centrosomes, thus initiating centrosome duplication. Cyclin E/CDK2-mediated phosphorylation of NPAT at G1-S transition and until prophase stimulates the NPAT-mediated activation of histone gene transcription during S phase. Required for vitamin D-mediated growth inhibition by being itself inactivated. Involved in the nitric oxide- (NO) mediated signaling in a nitrosylation/activation-dependent manner. USP37 is activated by phosphorylation and thus triggers G1-S transition. CTNNB1 phosphorylation regulates insulin internalization. Phosphorylates FOXP3 and negatively regulates its transcriptional activity and protein stability. Phosphorylates ERCC6 which is essential for its chromatin remodeling activity at DNA double-strand breaks. Acts as a regulator of the phosphatidylinositol 3-kinase/protein kinase B signal transduction by mediating phosphorylation of the C-terminus of protein kinase B (PKB/AKT1 and PKB/AKT2), promoting its activation. The sequence is that of Cyclin-dependent kinase 2 (Cdk2) from Mus musculus (Mouse).